The chain runs to 132 residues: Small ribosomal subunit protein uS8 (132 aa).

Belongs to the universal ribosomal protein uS8 family. In terms of assembly, part of the 30S ribosomal subunit. Contacts proteins S5 and S12.

One of the primary rRNA binding proteins, it binds directly to 16S rRNA central domain where it helps coordinate assembly of the platform of the 30S subunit. This is Small ribosomal subunit protein uS8 from Leuconostoc mesenteroides subsp. mesenteroides (strain ATCC 8293 / DSM 20343 / BCRC 11652 / CCM 1803 / JCM 6124 / NCDO 523 / NBRC 100496 / NCIMB 8023 / NCTC 12954 / NRRL B-1118 / 37Y).